Reading from the N-terminus, the 852-residue chain is Kinesin-like protein KIF18B (852 aa).

Positions 7–351 constitute a Kinesin motor domain; it reads TLQVVVRVRP…LKYADRAKEI (345 aa). Residue 109-116 participates in ATP binding; the sequence is GATGAGKT. Residues 366 to 393 are a coiled coil; it reads ISQYATICQQLQAEVAALRKKLQVYEGG. Disordered stretches follow at residues 390 to 424 and 437 to 485; these read YEGG…PAGP and QVER…RLTL. Ser-404 carries the post-translational modification Phosphoserine. Thr-417 bears the Phosphothreonine mark. Over residues 451-461 the composition is skewed to acidic residues; it reads QSPEDEDEGPA. 3 positions are modified to phosphoserine: Ser-452, Ser-480, and Ser-558. Disordered regions lie at residues 575 to 594 and 602 to 689; these read IPVP…PVTR and GPLH…SPRV. Residues 577–588 are compositionally biased toward pro residues; that stretch reads VPSPLCPEPPGY. Positions 624-632 match the Nuclear localization signal motif; it reads PMEKKRRRP. Ser-633 and Ser-639 each carry phosphoserine. Residues 653–656 carry the MAPRE1-binding motif; the sequence is SFLP. Phosphoserine is present on Ser-662. Polar residues predominate over residues 664–673; it reads PDTQPSQGPS. Position 674 is a phosphothreonine (Thr-674). The interval 711–736 is KIF2C-binding; it reads TPLALPTRDLNATFDLSEEPPSKPSF. The disordered stretch occupies residues 767–798; the sequence is MKGPKPTSSLPGTSACKKKRVASSSVSHGRSR. 2 consecutive short sequence motifs (MAPRE1-binding) follow at residues 774 to 777 and 800 to 803; these read SSLP and ARLP. Phosphoserine is present on Ser-822.

It belongs to the TRAFAC class myosin-kinesin ATPase superfamily. Kinesin family. Interacts with MAPRE1; this interaction is required for efficient accumulation at microtubule plus ends. Interacts with KIF2C at microtubule tips; this interaction increases the affinity of both partners for microtubule plus ends and is required for robust microtubule depolymerization. KIF2C phosphorylation by AURKA or AURKB strongly reduces KIF18B-binding. Shows a prominent expression in the amygdala.

It is found in the nucleus. Its subcellular location is the cytoplasm. It localises to the cytoskeleton. Functionally, in complex with KIF2C, constitutes the major microtubule plus-end depolymerizing activity in mitotic cells. Its major role may be to transport KIF2C and/or MAPRE1 along microtubules. The polypeptide is Kinesin-like protein KIF18B (KIF18B) (Homo sapiens (Human)).